The chain runs to 98 residues: Lactococcin-A immunity protein (98 aa).

In terms of biological role, imparts immunity to lactococcin-A to naturally sensitive host strains. The polypeptide is Lactococcin-A immunity protein (lciA) (Lactococcus lactis subsp. cremoris (Streptococcus cremoris)).